A 353-amino-acid polypeptide reads, in one-letter code: Protein Wnt-11b-1 (353 aa).

An N-terminal signal peptide occupies residues 1-22 (MAQIHHCVTLLLILCCSGLCGA). N-linked (GlcNAc...) asparagine glycosylation is found at Asn-31, Asn-38, and Asn-88. Intrachain disulfides connect Cys-78–Cys-89, Cys-128–Cys-136, Cys-138–Cys-155, Cys-208–Cys-222, and Cys-210–Cys-217. Ser-214 carries O-palmitoleoyl serine; by PORCN lipidation. Sulfotyrosine is present on residues Tyr-274 and Tyr-281. 6 disulfide bridges follow: Cys-282-Cys-313, Cys-298-Cys-308, Cys-312-Cys-352, Cys-328-Cys-343, Cys-330-Cys-340, and Cys-335-Cys-336. N-linked (GlcNAc...) asparagine glycosylation is present at Asn-299.

Belongs to the Wnt family. Homodimer. Secreted homodimers form a complex with wnt5a homodimers; tyrosine sulfation of both wnt11 and wnt5a by tpst1 is required for this interaction. Interacts with the transmembrane receptor fzd7/fz7. Interacts with lrp6 and ryk. Interacts with tdgf1/frl1. Interacts weakly with frzb1 and strongly with frzb2/crescent. Interaction with frzb2/crescent antagonizes wnt11 function in the neuroectoderm, but enhances it in mesodermal tissue. Post-translationally, glycosylation is required for protein secretion. Palmitoleoylation is required for efficient binding to frizzled receptors. Depalmitoleoylation leads to Wnt signaling pathway inhibition.

Its subcellular location is the secreted. The protein localises to the extracellular space. It localises to the extracellular matrix. Functionally, ligand for the frizzled7 transmembrane receptor. Primarily acts via non-canonical Wnt pathways mediated by either Ca(2+) and PKC, or by JNK and dvl2/dsh. Depending on the cellular context, can also signal via the canonical Wnt pathway mediated by beta-catenin and dvl2/dsh. May also inhibit canonical Wnt signaling. Maternally initiates dorsal/ventral axis formation by a canonical route, which signals via lrp6. In a complex with wnt5a, activates the canonical and non-canonical processes involved in axis formation. In the non-canonical pathway, acts through fzd7/fz7 to induce phosphorylation of dvl2/dsh. Signals through a non-canonical Wnt pathway to regulate convergent extension movements during gastrulation. Interactions with the secreted Wnt antagonist sfrp5 to coordinate foregut development, acting via a non-canonical wnt pathway whereby sfrp5 restricts wnt11b activity to prevent inappropriate foregut formation. Mediates cardiogenesis via non-canonical Wnt signaling involving JNK-activation and PKC. Acts redundantly with wnt11/wnt11r during pronephros induction. The protein is Protein Wnt-11b-1 of Xenopus tropicalis (Western clawed frog).